We begin with the raw amino-acid sequence, 367 residues long: Peptide chain release factor 2 (367 aa).

Position 247 is an N5-methylglutamine (Gln247).

This sequence belongs to the prokaryotic/mitochondrial release factor family. In terms of processing, methylated by PrmC. Methylation increases the termination efficiency of RF2.

Its subcellular location is the cytoplasm. Peptide chain release factor 2 directs the termination of translation in response to the peptide chain termination codons UGA and UAA. The chain is Peptide chain release factor 2 from Caulobacter sp. (strain K31).